The following is a 242-amino-acid chain: ATP synthase subunit a (242 aa).

The next 6 helical transmembrane spans lie at 29–49, 84–104, 114–134, 140–160, 189–209, and 210–230; these read SAAY…LAFS, FVPV…FGMI, IIIT…VGFV, FLSL…MIII, VIAS…IPLM, and VILI…FTIL.

The protein belongs to the ATPase A chain family. F-type ATPases have 2 components, CF(1) - the catalytic core - and CF(0) - the membrane proton channel. CF(1) has five subunits: alpha(3), beta(3), gamma(1), delta(1), epsilon(1). CF(0) has three main subunits: a(1), b(2) and c(9-12). The alpha and beta chains form an alternating ring which encloses part of the gamma chain. CF(1) is attached to CF(0) by a central stalk formed by the gamma and epsilon chains, while a peripheral stalk is formed by the delta and b chains.

It localises to the cell inner membrane. Key component of the proton channel; it plays a direct role in the translocation of protons across the membrane. In Rickettsia bellii (strain OSU 85-389), this protein is ATP synthase subunit a.